The sequence spans 372 residues: tRNA-specific 2-thiouridylase MnmA (372 aa).

ATP is bound by residues 16 to 23 and methionine 42; that span reads GMSGGVDS. Positions 102 to 104 are interaction with target base in tRNA; that stretch reads NPD. Cysteine 107 (nucleophile) is an active-site residue. Cysteines 107 and 205 form a disulfide. Glycine 132 contributes to the ATP binding site. The interaction with tRNA stretch occupies residues 155-157; sequence KDQ. Residue cysteine 205 is the Cysteine persulfide intermediate of the active site. The interval 317 to 318 is interaction with tRNA; it reads RY.

It belongs to the MnmA/TRMU family.

It localises to the cytoplasm. The enzyme catalyses S-sulfanyl-L-cysteinyl-[protein] + uridine(34) in tRNA + AH2 + ATP = 2-thiouridine(34) in tRNA + L-cysteinyl-[protein] + A + AMP + diphosphate + H(+). Catalyzes the 2-thiolation of uridine at the wobble position (U34) of tRNA, leading to the formation of s(2)U34. This is tRNA-specific 2-thiouridylase MnmA from Shewanella frigidimarina (strain NCIMB 400).